The primary structure comprises 430 residues: Serine--tRNA ligase (430 aa).

Residue 237–239 (TAE) participates in L-serine binding. 268 to 270 (RSE) is an ATP binding site. E291 is an L-serine binding site. 355–358 (EISS) is a binding site for ATP. S391 is a binding site for L-serine.

The protein belongs to the class-II aminoacyl-tRNA synthetase family. Type-1 seryl-tRNA synthetase subfamily. In terms of assembly, homodimer. The tRNA molecule binds across the dimer.

Its subcellular location is the cytoplasm. The enzyme catalyses tRNA(Ser) + L-serine + ATP = L-seryl-tRNA(Ser) + AMP + diphosphate + H(+). The catalysed reaction is tRNA(Sec) + L-serine + ATP = L-seryl-tRNA(Sec) + AMP + diphosphate + H(+). The protein operates within aminoacyl-tRNA biosynthesis; selenocysteinyl-tRNA(Sec) biosynthesis; L-seryl-tRNA(Sec) from L-serine and tRNA(Sec): step 1/1. In terms of biological role, catalyzes the attachment of serine to tRNA(Ser). Is also able to aminoacylate tRNA(Sec) with serine, to form the misacylated tRNA L-seryl-tRNA(Sec), which will be further converted into selenocysteinyl-tRNA(Sec). This Yersinia enterocolitica serotype O:8 / biotype 1B (strain NCTC 13174 / 8081) protein is Serine--tRNA ligase.